The primary structure comprises 412 residues: Inositol polyphosphate-5-phosphatase A (412 aa).

C409 is lipidated: S-farnesyl cysteine. Positions 410-412 (VVQ) are cleaved as a propeptide — removed in mature form.

It belongs to the inositol 1,4,5-trisphosphate 5-phosphatase type I family. In terms of assembly, interacts with TASOR. Post-translationally, isoprenylation at Cys-409 is required for localization at the membrane. Predominantly expressed in heart, brain, and skeletal muscle. In brain; high level in Purkinje cells.

It is found in the cell membrane. The protein localises to the cell projection. The protein resides in the dendrite. The enzyme catalyses 1D-myo-inositol 1,4,5-trisphosphate + H2O = 1D-myo-inositol 1,4-bisphosphate + phosphate. It carries out the reaction 1D-myo-inositol 1,3,4,5-tetrakisphosphate + H2O = 1D-myo-inositol 1,3,4-trisphosphate + phosphate. Functionally, phosphatase that specifically hydrolyzes the 5-phosphate of inositol 1,4,5-trisphosphate to inositol 1,4-bisphosphate, and inositol 1,3,4,5-tetrasphosphate to inositol 1,3,4-trisphosphate. Plays a crucial role in the survival of cerebellar Purkinje cells. In Homo sapiens (Human), this protein is Inositol polyphosphate-5-phosphatase A.